The primary structure comprises 116 residues: MGVERKIITRGSGPSPASGDKVSIHYTGWIYDPKKANKGFQGKQFDSSRSPGRGPLVVNIGQGKVIKGWDEGVMQMSLGEKSTLTITPDYGYGDKAAGKIPANSTLIFEVELLKIN.

Positions 19–116 constitute a PPIase FKBP-type domain; it reads GDKVSIHYTG…IFEVELLKIN (98 aa).

This sequence belongs to the FKBP-type PPIase family. FKBP1 subfamily.

The protein resides in the cytoplasm. The enzyme catalyses [protein]-peptidylproline (omega=180) = [protein]-peptidylproline (omega=0). Inhibited by both FK506 and rapamycin. In terms of biological role, PPIases accelerate the folding of proteins. It catalyzes the cis-trans isomerization of proline imidic peptide bonds in oligopeptides. The protein is FK506-binding protein 1 (fpr1) of Aspergillus oryzae (strain ATCC 42149 / RIB 40) (Yellow koji mold).